The chain runs to 451 residues: BSD domain-containing protein 1 (451 aa).

The 53-residue stretch at W146–E198 folds into the BSD domain. 2 disordered regions span residues S252–T296 and L309–M424. Over residues P275 to V295 the composition is skewed to low complexity. The segment covering L309–D320 has biased composition (polar residues). Residues K365–V388 are compositionally biased toward basic and acidic residues. The segment covering N392–D411 has biased composition (polar residues). Residues I412–M424 are compositionally biased toward acidic residues.

The protein is BSD domain-containing protein 1 (BSDC1) of Gallus gallus (Chicken).